Here is a 1025-residue protein sequence, read N- to C-terminus: MKFFALFIYRPVATILISLAITLCGILGFRLLPVAPLPQVDFPVIMVSASLPGASPETMASSVATPLERSLGRIAGVNEMTSSSSLGSTRIILEFNFDRDINGAARDVQAAINAAQSLLPSGMPSRPTYRKANPSDAPIMILTLTSDTYSQGELYDFASTQLAQTIAQIDGVGDVDVGGSSLPAVRVDLNPQALFNQGVSLDAVRTAISDANVRKPQGALEDSAHRWQVQTNDELKTAADYQPLIVHYQNGAAVRLGDVATVSDSVQDVRNAGMTNAKPAILLMIRKLPEANIIQTVDSIRARLPELQQTIPAAIDLQIAQDRSPTIRASLEEVEQTLVISVALVILVVFLFLRSGRATLIPAVAVPVSLIGTFAAMYLCGFSLNNLSLMALTIATGFVVDDAIVVLENISRHLEAGMKPLQAALQGSREVGFTVLSMSLSLVAVFLPLLLMGGLPGRLLREFAVTLSVAIGISLAVSLTLTPMMCGWLLKSGKPHQPTRNRGFGRLLVAVQGGYGKSLKWVLKHSRLTGLVVLGTIALSVWLYISIPKTFFPEQDTGVLMGGIQADQSISFQAMRGKLQDFMKIIREDPAVDNVTGFTGGSRVNSGMMFITLKPRDQRHETAQQVIDRLRKKLANEPGANLFLMAVQDIRVGGRQSNASYQYTLLSDDLSALREWEPKIRKALAALPELADVNSDQQDNGAEMDLVYDRDTMSRLGISVQDANNLLNNAFGQRQISTIYQPLNQYKVVMEVDPAYTQDVSALDKMFVINSDGKPIPLAYFAKWQPANAPLSVNHQGLSAASTISFNLPTGRSLSEASEAIDRAMTQLGVPSSVRGSFAGTAQVFQQTMNAQVILILAAIATVYIVLGVLYESYVHPLTILSTLPSAGVGALLALEIFDAPFSLIALIGIMLLIGIVKKNAIMMVDFALEAQRNGNLTPEEAIFQACLLRFRPIMMTTLAALFGALPLVLSGGDGSELRQPLGITIVGGLVMSQLLTLYTTPVVYLFFDRLRLRFSRHSSQPVSE.

A run of 12 helical transmembrane segments spans residues 15 to 35, 333 to 353, 360 to 380, 387 to 407, 431 to 451, 469 to 489, 528 to 548, 851 to 871, 875 to 895, 897 to 917, 953 to 973, and 984 to 1004; these read ILISLAITLCGILGFRLLPVA, EVEQTLVISVALVILVVFLFL, LIPAVAVPVSLIGTFAAMYLC, LSLMALTIATGFVVDDAIVVL, VGFTVLSMSLSLVAVFLPLLL, VAIGISLAVSLTLTPMMCGWL, LTGLVVLGTIALSVWLYISIP, AQVILILAAIATVYIVLGVLY, VHPLTILSTLPSAGVGALLAL, IFDAPFSLIALIGIMLLIGIV, PIMMTTLAALFGALPLVLSGG, and ITIVGGLVMSQLLTLYTTPVV.

This sequence belongs to the resistance-nodulation-cell division (RND) (TC 2.A.6) family. MdtC subfamily. Part of a tripartite efflux system composed of MdtA, MdtB and MdtC. MdtC forms a heteromultimer with MdtB.

It localises to the cell inner membrane. In Klebsiella pneumoniae subsp. pneumoniae (strain ATCC 700721 / MGH 78578), this protein is Multidrug resistance protein MdtC.